A 1157-amino-acid chain; its full sequence is Probable ATP-dependent RNA helicase DHX37 (1157 aa).

Residues 1–10 (MGKLRRRYNI) show a composition bias toward basic residues. Disordered stretches follow at residues 1–77 (MGKL…KKEK) and 116–225 (TSKL…AAPP). Pro residues predominate over residues 21–30 (SKGPPEPPPV). The segment covering 159-184 (AEEEEEEEEESESELEEESELDEDPA) has biased composition (acidic residues). 2 stretches are compositionally biased toward pro residues: residues 198–208 (PLPPAPAPSSQ) and 216–225 (VPPPPAAAPP). One can recognise a Helicase ATP-binding domain in the interval 262–429 (MEAVAEHPIV…PRLFAKPPPV (168 aa)). Residue 275-282 (GETGSGKT) coordinates ATP. A DEAH box motif is present at residues 372-375 (DEAH). The region spanning 459–716 (KVCKIHRMLP…DLILQMKALN (258 aa)) is the Helicase C-terminal domain. Disordered regions lie at residues 494 to 523 (PPSR…SRAR) and 542 to 584 (VLPA…QPDA). The span at 499–515 (RPQEKDDDQKDSVEEMR) shows a compositional bias: basic and acidic residues. The segment covering 547-571 (EGDEDREAEVDEEEGALDSDLDLDL) has biased composition (acidic residues).

This sequence belongs to the DEAD box helicase family. DEAH subfamily. As to quaternary structure, part of the small subunit (SSU) processome, composed of more than 70 proteins and the RNA chaperone small nucleolar RNA (snoRNA) U3. Interacts with UTP14A. As to expression, expressed in the fallopian tube, ovary, uterus and testis. Also expressed in the brain.

It is found in the nucleus. The protein resides in the nucleolus. The protein localises to the cytoplasm. Its subcellular location is the nucleus membrane. It carries out the reaction ATP + H2O = ADP + phosphate + H(+). ATP-binding RNA helicase that plays a role in maturation of the small ribosomal subunit in ribosome biogenesis. Required for the release of the U3 snoRNP from pre-ribosomal particles. Part of the small subunit (SSU) processome, first precursor of the small eukaryotic ribosomal subunit. During the assembly of the SSU processome in the nucleolus, many ribosome biogenesis factors, an RNA chaperone and ribosomal proteins associate with the nascent pre-rRNA and work in concert to generate RNA folding, modifications, rearrangements and cleavage as well as targeted degradation of pre-ribosomal RNA by the RNA exosome. Plays a role in early testis development. Probably also plays a role in brain development. The polypeptide is Probable ATP-dependent RNA helicase DHX37 (Homo sapiens (Human)).